The primary structure comprises 1349 residues: DNA-directed RNA polymerase subunit beta' (1349 aa).

Zn(2+) is bound by residues cysteine 70, cysteine 72, cysteine 85, and cysteine 88. The Mg(2+) site is built by aspartate 460, aspartate 462, and aspartate 464. 4 residues coordinate Zn(2+): cysteine 801, cysteine 875, cysteine 882, and cysteine 885.

The protein belongs to the RNA polymerase beta' chain family. The RNAP catalytic core consists of 2 alpha, 1 beta, 1 beta' and 1 omega subunit. When a sigma factor is associated with the core the holoenzyme is formed, which can initiate transcription. Requires Mg(2+) as cofactor. Zn(2+) is required as a cofactor.

The enzyme catalyses RNA(n) + a ribonucleoside 5'-triphosphate = RNA(n+1) + diphosphate. In terms of biological role, DNA-dependent RNA polymerase catalyzes the transcription of DNA into RNA using the four ribonucleoside triphosphates as substrates. This chain is DNA-directed RNA polymerase subunit beta', found in Desulfotalea psychrophila (strain LSv54 / DSM 12343).